We begin with the raw amino-acid sequence, 155 residues long: MECPNCHQNASRVIDSRPSDENRAIRRRRECENCGFRFTTFERIETAPLLVVKNDGTREPFSRKKILHGVMAAGQKRPISSEQFEHLVDQVENKVRKQGVSEISSKKIGQYVMDDLADLDDVAYIRFASIYREFKDMSSFMKTMEDMMAKKEKGN.

Over residues 1–11 (MECPNCHQNAS) the composition is skewed to polar residues. Residues 1–22 (MECPNCHQNASRVIDSRPSDEN) form a disordered region. Residues 3-34 (CPNCHQNASRVIDSRPSDENRAIRRRRECENC) fold into a zinc finger. Positions 49-139 (LLVVKNDGTR…IYREFKDMSS (91 aa)) constitute an ATP-cone domain.

This sequence belongs to the NrdR family. Zn(2+) serves as cofactor.

Negatively regulates transcription of bacterial ribonucleotide reductase nrd genes and operons by binding to NrdR-boxes. The polypeptide is Transcriptional repressor NrdR (Lactobacillus acidophilus (strain ATCC 700396 / NCK56 / N2 / NCFM)).